An 81-amino-acid chain; its full sequence is MDTKVACLLLIILGALTVQGAVSGNKRMNLHARQWGGIERECMNNGEEQCFPMGQCPGGFRECSEYYCGSPSLGCCCWDEW.

A signal peptide spans 1-23 (MDTKVACLLLIILGALTVQGAVS). Positions 24-25 (GN) are excised as a propeptide.

The protein belongs to the Cnidaria small cysteine-rich protein (SCRiP) family. beta subfamily. In terms of processing, contains 4 disulfide bonds.

The protein localises to the secreted. The protein resides in the nematocyst. Its function is as follows. Induces neurotoxic symptoms on zebrafish. Has also been claimed to be implied in calcification, but tests on homolog proteins suggest that proteins of this family have a neurotoxic function and not a calcification function. In Orbicella faveolata (Mountainous star coral), this protein is Small cysteine-rich protein 4.